An 858-amino-acid chain; its full sequence is DNA mismatch repair protein MutS (858 aa).

613–620 is a binding site for ATP; it reads GPNMAGKS.

Belongs to the DNA mismatch repair MutS family.

In terms of biological role, this protein is involved in the repair of mismatches in DNA. It is possible that it carries out the mismatch recognition step. This protein has a weak ATPase activity. The protein is DNA mismatch repair protein MutS of Dehalococcoides mccartyi (strain ATCC BAA-2266 / KCTC 15142 / 195) (Dehalococcoides ethenogenes (strain 195)).